A 323-amino-acid chain; its full sequence is Fructose-1,6-bisphosphatase class 1 (323 aa).

Mg(2+)-binding residues include Glu84, Asp103, Leu105, and Asp106. Residues 106–109, Asn198, and Lys264 contribute to the substrate site; that span reads DGSS. Glu270 contributes to the Mg(2+) binding site.

It belongs to the FBPase class 1 family. In terms of assembly, homotetramer. The cofactor is Mg(2+).

The protein localises to the cytoplasm. It carries out the reaction beta-D-fructose 1,6-bisphosphate + H2O = beta-D-fructose 6-phosphate + phosphate. Its pathway is carbohydrate biosynthesis; gluconeogenesis. The protein is Fructose-1,6-bisphosphatase class 1 of Pseudoalteromonas atlantica (strain T6c / ATCC BAA-1087).